A 292-amino-acid polypeptide reads, in one-letter code: Acetyl-coenzyme A carboxylase carboxyl transferase subunit beta (292 aa).

Residues 36 to 292 (MWSKCEKCAK…LLRMHEVDYE (257 aa)) form the CoA carboxyltransferase N-terminal domain. The Zn(2+) site is built by Cys-40, Cys-43, Cys-59, and Cys-62. A C4-type zinc finger spans residues 40–62 (CEKCAKILYTEDLRENFNVCPNC).

The protein belongs to the AccD/PCCB family. As to quaternary structure, acetyl-CoA carboxylase is a heterohexamer composed of biotin carboxyl carrier protein (AccB), biotin carboxylase (AccC) and two subunits each of ACCase subunit alpha (AccA) and ACCase subunit beta (AccD). Zn(2+) is required as a cofactor.

It is found in the cytoplasm. The catalysed reaction is N(6)-carboxybiotinyl-L-lysyl-[protein] + acetyl-CoA = N(6)-biotinyl-L-lysyl-[protein] + malonyl-CoA. The protein operates within lipid metabolism; malonyl-CoA biosynthesis; malonyl-CoA from acetyl-CoA: step 1/1. Component of the acetyl coenzyme A carboxylase (ACC) complex. Biotin carboxylase (BC) catalyzes the carboxylation of biotin on its carrier protein (BCCP) and then the CO(2) group is transferred by the transcarboxylase to acetyl-CoA to form malonyl-CoA. The polypeptide is Acetyl-coenzyme A carboxylase carboxyl transferase subunit beta (Clostridium perfringens (strain 13 / Type A)).